The sequence spans 84 residues: Metallothionein-like protein 2C (84 aa).

It belongs to the metallothionein superfamily. Type 15 family.

The protein localises to the cytoplasm. It is found in the cytosol. Functionally, metallothioneins have a high content of cysteine residues that bind various heavy metals. Acts as a reactive oxygen species (ROS) scavenger in the cytosol. Possesses superoxide anion and hydroxyl radical scavenging activities in vitro. Plays a role during root development, lateral root initiation and seed embryo germination, possibly by regulating levels of cytokinin. This chain is Metallothionein-like protein 2C (MT2C), found in Oryza sativa subsp. indica (Rice).